A 183-amino-acid polypeptide reads, in one-letter code: RNA 2',3'-cyclic phosphodiesterase (183 aa).

His44 serves as the catalytic Proton donor. 2 consecutive short sequence motifs (HXTX) follow at residues 44 to 47 and 130 to 133; these read HITL and HMTL. Residue His130 is the Proton acceptor of the active site.

It belongs to the 2H phosphoesterase superfamily. ThpR family.

It carries out the reaction a 3'-end 2',3'-cyclophospho-ribonucleotide-RNA + H2O = a 3'-end 2'-phospho-ribonucleotide-RNA + H(+). Hydrolyzes RNA 2',3'-cyclic phosphodiester to an RNA 2'-phosphomonoester. This is RNA 2',3'-cyclic phosphodiesterase (ytlP) from Bacillus subtilis (strain 168).